Consider the following 194-residue polypeptide: Imidazoleglycerol-phosphate dehydratase (194 aa).

It belongs to the imidazoleglycerol-phosphate dehydratase family.

The protein resides in the cytoplasm. The enzyme catalyses D-erythro-1-(imidazol-4-yl)glycerol 3-phosphate = 3-(imidazol-4-yl)-2-oxopropyl phosphate + H2O. It functions in the pathway amino-acid biosynthesis; L-histidine biosynthesis; L-histidine from 5-phospho-alpha-D-ribose 1-diphosphate: step 6/9. This is Imidazoleglycerol-phosphate dehydratase from Bacillus cereus (strain ZK / E33L).